A 458-amino-acid polypeptide reads, in one-letter code: Argininosuccinate lyase (458 aa).

It belongs to the lyase 1 family. Argininosuccinate lyase subfamily.

Its subcellular location is the cytoplasm. The enzyme catalyses 2-(N(omega)-L-arginino)succinate = fumarate + L-arginine. The protein operates within amino-acid biosynthesis; L-arginine biosynthesis; L-arginine from L-ornithine and carbamoyl phosphate: step 3/3. This is Argininosuccinate lyase from Buchnera aphidicola subsp. Baizongia pistaciae (strain Bp).